The sequence spans 128 residues: Azurin (128 aa).

Positions 1–128 (ACDVSIEGND…IMKGTIELGS (128 aa)) constitute a Plastocyanin-like domain. Residues cysteine 2 and cysteine 25 are joined by a disulfide bond. 4 residues coordinate Cu cation: histidine 45, cysteine 111, histidine 116, and methionine 120.

As to quaternary structure, monomer. Interacts with the AAUA/AAUB heterotetramer complex. Cu cation is required as a cofactor.

The protein resides in the periplasm. Functionally, transfers electrons from cytochrome c551 to cytochrome oxidase. Transfers electrons from the tryptophan tryptophylquinone of the aromatic amine dehydrogenase heterotetramer. The protein is Azurin of Alcaligenes faecalis.